The sequence spans 343 residues: Cilia- and flagella-associated protein 36 (343 aa).

Phosphoserine occurs at positions 85 and 147. Positions 147–181 (SDLEQEEMKILREVLRKSKEEYDQEEERKRKKQSS) form a coiled coil. Residues 165 to 191 (KEEYDQEEERKRKKQSSEGKMEEPPIY) form a disordered region. Phosphoserine is present on serine 201. Positions 286–323 (SMRKDMRAKQIQNTEQKGKPTREAEEMTEKPEMTAEEK) are disordered. Residues 301-323 (QKGKPTREAEEMTEKPEMTAEEK) are compositionally biased toward basic and acidic residues.

This sequence belongs to the CFAP36 family. As to quaternary structure, interacts with ARL3. In terms of tissue distribution, widely expressed (at protein level).

It is found in the nucleus. Its subcellular location is the cytoplasm. The protein resides in the cell projection. It localises to the cilium. The protein localises to the flagellum. May act as an effector for ARL3. The protein is Cilia- and flagella-associated protein 36 of Rattus norvegicus (Rat).